Reading from the N-terminus, the 630-residue chain is 1-deoxy-D-xylulose-5-phosphate synthase (630 aa).

Residues His-87 and 128-130 (GHS) contribute to the thiamine diphosphate site. Asp-159 serves as a coordination point for Mg(2+). Residues 160 to 161 (GA), Asn-188, Phe-295, and Glu-377 each bind thiamine diphosphate. Position 188 (Asn-188) interacts with Mg(2+).

The protein belongs to the transketolase family. DXPS subfamily. In terms of assembly, homodimer. Mg(2+) serves as cofactor. Thiamine diphosphate is required as a cofactor.

The enzyme catalyses D-glyceraldehyde 3-phosphate + pyruvate + H(+) = 1-deoxy-D-xylulose 5-phosphate + CO2. It participates in metabolic intermediate biosynthesis; 1-deoxy-D-xylulose 5-phosphate biosynthesis; 1-deoxy-D-xylulose 5-phosphate from D-glyceraldehyde 3-phosphate and pyruvate: step 1/1. Functionally, catalyzes the acyloin condensation reaction between C atoms 2 and 3 of pyruvate and glyceraldehyde 3-phosphate to yield 1-deoxy-D-xylulose-5-phosphate (DXP). The sequence is that of 1-deoxy-D-xylulose-5-phosphate synthase from Pseudomonas savastanoi pv. phaseolicola (strain 1448A / Race 6) (Pseudomonas syringae pv. phaseolicola (strain 1448A / Race 6)).